The primary structure comprises 200 residues: A-type ATP synthase subunit E 3 (200 aa).

Belongs to the V-ATPase E subunit family. As to quaternary structure, has multiple subunits with at least A(3), B(3), C, D, E, F, H, I and proteolipid K(x).

Its subcellular location is the cell membrane. Functionally, component of the A-type ATP synthase that produces ATP from ADP in the presence of a proton gradient across the membrane. The chain is A-type ATP synthase subunit E 3 from Methanospirillum hungatei JF-1 (strain ATCC 27890 / DSM 864 / NBRC 100397 / JF-1).